The following is a 452-amino-acid chain: Ethanolamine kinase 1 (452 aa).

The segment at 26–64 (AVQTRIGNSAASRRSPAARPPVPAPPALPRGRPGTEGST) is disordered. Positions 43–53 (ARPPVPAPPAL) are enriched in pro residues.

Belongs to the choline/ethanolamine kinase family. Expressed in kidney, liver, placenta, heart, leukocyte, ovary and testis.

Its subcellular location is the cytoplasm. The catalysed reaction is ethanolamine + ATP = phosphoethanolamine + ADP + H(+). It functions in the pathway phospholipid metabolism; phosphatidylethanolamine biosynthesis; phosphatidylethanolamine from ethanolamine: step 1/3. Its function is as follows. Highly specific for ethanolamine phosphorylation. May be a rate-controlling step in phosphatidylethanolamine biosynthesis. This chain is Ethanolamine kinase 1, found in Homo sapiens (Human).